Reading from the N-terminus, the 69-residue chain is MKEGIHPDYSEAVVKCACGETFTTGSTKKSLHVEICSKCHPFYTGRQKLVDTGGRVDKFKKKYGIVDNE.

Zn(2+) contacts are provided by Cys16, Cys18, Cys36, and Cys39.

The protein belongs to the bacterial ribosomal protein bL31 family. Type A subfamily. As to quaternary structure, part of the 50S ribosomal subunit. Requires Zn(2+) as cofactor.

Its function is as follows. Binds the 23S rRNA. In Ruminiclostridium cellulolyticum (strain ATCC 35319 / DSM 5812 / JCM 6584 / H10) (Clostridium cellulolyticum), this protein is Large ribosomal subunit protein bL31.